Reading from the N-terminus, the 158-residue chain is NAD(P)H-quinone oxidoreductase subunit N, organellar chromatophore (158 aa).

Belongs to the complex I NdhN subunit family. NDH-1 can be composed of about 15 different subunits; different subcomplexes with different compositions have been identified which probably have different functions.

Its subcellular location is the plastid. It localises to the organellar chromatophore thylakoid membrane. It carries out the reaction a plastoquinone + NADH + (n+1) H(+)(in) = a plastoquinol + NAD(+) + n H(+)(out). The enzyme catalyses a plastoquinone + NADPH + (n+1) H(+)(in) = a plastoquinol + NADP(+) + n H(+)(out). Functionally, NDH-1 shuttles electrons from an unknown electron donor, via FMN and iron-sulfur (Fe-S) centers, to quinones in the respiratory and/or the photosynthetic chain. The immediate electron acceptor for the enzyme in this species is believed to be plastoquinone. Couples the redox reaction to proton translocation, and thus conserves the redox energy in a proton gradient. The protein is NAD(P)H-quinone oxidoreductase subunit N, organellar chromatophore of Paulinella chromatophora.